We begin with the raw amino-acid sequence, 123 residues long: Small ribosomal subunit protein uS12 (123 aa).

The residue at position 89 (Asp-89) is a 3-methylthioaspartic acid.

It belongs to the universal ribosomal protein uS12 family. In terms of assembly, part of the 30S ribosomal subunit. Contacts proteins S8 and S17. May interact with IF1 in the 30S initiation complex.

Functionally, with S4 and S5 plays an important role in translational accuracy. Its function is as follows. Interacts with and stabilizes bases of the 16S rRNA that are involved in tRNA selection in the A site and with the mRNA backbone. Located at the interface of the 30S and 50S subunits, it traverses the body of the 30S subunit contacting proteins on the other side and probably holding the rRNA structure together. The combined cluster of proteins S8, S12 and S17 appears to hold together the shoulder and platform of the 30S subunit. This chain is Small ribosomal subunit protein uS12, found in Chelativorans sp. (strain BNC1).